The sequence spans 291 residues: tRNA U34 carboxymethyltransferase (291 aa).

Carboxy-S-adenosyl-L-methionine-binding positions include Lys-61, Trp-75, Lys-80, Gly-100, 122-124 (DPS), 149-150 (VE), Tyr-169, and Arg-284.

Belongs to the class I-like SAM-binding methyltransferase superfamily. CmoB family. In terms of assembly, homotetramer.

It carries out the reaction carboxy-S-adenosyl-L-methionine + 5-hydroxyuridine(34) in tRNA = 5-carboxymethoxyuridine(34) in tRNA + S-adenosyl-L-homocysteine + H(+). Catalyzes carboxymethyl transfer from carboxy-S-adenosyl-L-methionine (Cx-SAM) to 5-hydroxyuridine (ho5U) to form 5-carboxymethoxyuridine (cmo5U) at position 34 in tRNAs. The sequence is that of tRNA U34 carboxymethyltransferase from Campylobacter jejuni subsp. jejuni serotype O:2 (strain ATCC 700819 / NCTC 11168).